The primary structure comprises 581 residues: Pentatricopeptide repeat-containing protein At3g56550 (581 aa).

9 PPR repeats span residues 70–104 (STSDWNYLIRGFSNSSSPLNSILFYNRMLLSSVSR), 106–140 (DLFTFNFALKSCERIKSIPKCLEIHGSVIRSGFLD), 141–171 (DAIVATSLVRCYSANGSVEIASKVFDEMPVR), 172–206 (DLVSWNVMICCFSHVGLHNQALSMYKRMGNEGVCG), 207–241 (DSYTLVALLSSCAHVSALNMGVMLHRIACDIRCES), 242–272 (CVFVSNALIDMYAKCGSLENAIGVFNGMRKR), 273–307 (DVLTWNSMIIGYGVHGHGVEAISFFRKMVASGVRP), 308–338 (NAITFLGLLLGCSHQGLVKEGVEHFEIMSSQ), and 344–378 (NVKHYGCMVDLYGRAGQLENSLEMIYASSCHEDPV). The type E motif stretch occupies residues 379 to 454 (LWRTLLGSCK…VPGWSWIEIG (76 aa)). The interval 455-485 (DQVHKFVVDDKMHPESAVIYSELGEVINRAI) is type E(+) motif. Residues 486-581 (LAGYKPEDSN…DGICSCNDYW (96 aa)) form a type DYW motif region.

This sequence belongs to the PPR family. PCMP-H subfamily.

This chain is Pentatricopeptide repeat-containing protein At3g56550 (PCMP-H80), found in Arabidopsis thaliana (Mouse-ear cress).